We begin with the raw amino-acid sequence, 419 residues long: Histidine--tRNA ligase (419 aa).

Belongs to the class-II aminoacyl-tRNA synthetase family. As to quaternary structure, homodimer.

The protein localises to the cytoplasm. The catalysed reaction is tRNA(His) + L-histidine + ATP = L-histidyl-tRNA(His) + AMP + diphosphate + H(+). In Synechococcus sp. (strain JA-3-3Ab) (Cyanobacteria bacterium Yellowstone A-Prime), this protein is Histidine--tRNA ligase.